The sequence spans 174 residues: MNTMNSVLQCKELALYGGSFDPLHKAHLAIIDQTLELLPFVKLIVLPAYQNPFKKPCFLDVQTRFKELERALRGIDRVLLSDFEIKQERAVPTIESVIYFQKLYCPKTLYLVIGADCLRHLSSWTNAKELLKRVELVVFERIGYEEIQFKGRYFPLKGIDAPISSSAIRASLGV.

Belongs to the NadD family.

The enzyme catalyses nicotinate beta-D-ribonucleotide + ATP + H(+) = deamido-NAD(+) + diphosphate. Its pathway is cofactor biosynthesis; NAD(+) biosynthesis; deamido-NAD(+) from nicotinate D-ribonucleotide: step 1/1. In terms of biological role, catalyzes the reversible adenylation of nicotinate mononucleotide (NaMN) to nicotinic acid adenine dinucleotide (NaAD). In Helicobacter pylori (strain HPAG1), this protein is Probable nicotinate-nucleotide adenylyltransferase.